Reading from the N-terminus, the 609-residue chain is Probable translation initiation factor IF-2 (609 aa).

The tr-type G domain occupies 12–230; it reads LRQPIVAVLG…VLAGLAQRYM (219 aa). The interval 21–28 is G1; sequence GHVDHGKT. 21 to 28 is a binding site for GTP; that stretch reads GHVDHGKT. A G2 region spans residues 46 to 50; that stretch reads QITQH. The tract at residues 86–89 is G3; the sequence is DTPG. GTP is bound by residues 86-90 and 140-143; these read DTPGH and NKID. Positions 140–143 are G4; that stretch reads NKID. The interval 208-210 is G5; that stretch reads SAK.

This sequence belongs to the TRAFAC class translation factor GTPase superfamily. Classic translation factor GTPase family. IF-2 subfamily.

Function in general translation initiation by promoting the binding of the formylmethionine-tRNA to ribosomes. Seems to function along with eIF-2. The sequence is that of Probable translation initiation factor IF-2 from Ignicoccus hospitalis (strain KIN4/I / DSM 18386 / JCM 14125).